The following is a 164-amino-acid chain: MALRLWASSAANALKISCSGATRAAPAYSISRYFSTVLDGLKYSSSHEWVKNDGSVATIGITDHAQGHLGEVVFVELPEAGAKVSQGGAFGNVESVKATSDINSPISGEVVEVNDKLSETPGLINSSPYEDGWMIKVKPSSPSELDALLDPAKYTKHCEEEDAH.

Residues 1–34 (MALRLWASSAANALKISCSGATRAAPAYSISRYF) constitute a mitochondrion transit peptide. The region spanning 56 to 138 (VATIGITDHA…YEDGWMIKVK (83 aa)) is the Lipoyl-binding domain. Lysine 97 is subject to N6-lipoyllysine.

It belongs to the GcvH family. The glycine cleavage system is composed of four proteins: P, T, L and H. The cofactor is (R)-lipoate.

It is found in the mitochondrion. Its function is as follows. The glycine cleavage system catalyzes the degradation of glycine. The H protein shuttles the methylamine group of glycine from the P protein to the T protein. This is Glycine cleavage system H protein, mitochondrial (GDCSH) from Oryza sativa subsp. indica (Rice).